We begin with the raw amino-acid sequence, 70 residues long: ATP synthase subunit c (70 aa).

The next 2 membrane-spanning stretches (helical) occupy residues 3–23 and 47–67; these read FIAA…GNGM and FIGV…AFML.

The protein belongs to the ATPase C chain family. F-type ATPases have 2 components, F(1) - the catalytic core - and F(0) - the membrane proton channel. F(1) has five subunits: alpha(3), beta(3), gamma(1), delta(1), epsilon(1). F(0) has three main subunits: a(1), b(2) and c(10-14). The alpha and beta chains form an alternating ring which encloses part of the gamma chain. F(1) is attached to F(0) by a central stalk formed by the gamma and epsilon chains, while a peripheral stalk is formed by the delta and b chains.

It is found in the cell membrane. F(1)F(0) ATP synthase produces ATP from ADP in the presence of a proton or sodium gradient. F-type ATPases consist of two structural domains, F(1) containing the extramembraneous catalytic core and F(0) containing the membrane proton channel, linked together by a central stalk and a peripheral stalk. During catalysis, ATP synthesis in the catalytic domain of F(1) is coupled via a rotary mechanism of the central stalk subunits to proton translocation. Its function is as follows. Key component of the F(0) channel; it plays a direct role in translocation across the membrane. A homomeric c-ring of between 10-14 subunits forms the central stalk rotor element with the F(1) delta and epsilon subunits. The chain is ATP synthase subunit c from Lacticaseibacillus casei (strain BL23) (Lactobacillus casei).